Consider the following 162-residue polypeptide: ATP synthase subunit b (162 aa).

Residues 4–24 (INWGSIIYQLIAFCVLLWLLS) form a helical membrane-spanning segment.

It belongs to the ATPase B chain family. F-type ATPases have 2 components, F(1) - the catalytic core - and F(0) - the membrane proton channel. F(1) has five subunits: alpha(3), beta(3), gamma(1), delta(1), epsilon(1). F(0) has three main subunits: a(1), b(2) and c(10-14). The alpha and beta chains form an alternating ring which encloses part of the gamma chain. F(1) is attached to F(0) by a central stalk formed by the gamma and epsilon chains, while a peripheral stalk is formed by the delta and b chains.

The protein resides in the cell membrane. F(1)F(0) ATP synthase produces ATP from ADP in the presence of a proton or sodium gradient. F-type ATPases consist of two structural domains, F(1) containing the extramembraneous catalytic core and F(0) containing the membrane proton channel, linked together by a central stalk and a peripheral stalk. During catalysis, ATP synthesis in the catalytic domain of F(1) is coupled via a rotary mechanism of the central stalk subunits to proton translocation. Functionally, component of the F(0) channel, it forms part of the peripheral stalk, linking F(1) to F(0). The chain is ATP synthase subunit b from Halalkalibacterium halodurans (strain ATCC BAA-125 / DSM 18197 / FERM 7344 / JCM 9153 / C-125) (Bacillus halodurans).